Reading from the N-terminus, the 358-residue chain is UDP-3-O-acylglucosamine N-acyltransferase (358 aa).

His252 serves as the catalytic Proton acceptor.

Belongs to the transferase hexapeptide repeat family. LpxD subfamily. In terms of assembly, homotrimer.

The enzyme catalyses a UDP-3-O-[(3R)-3-hydroxyacyl]-alpha-D-glucosamine + a (3R)-hydroxyacyl-[ACP] = a UDP-2-N,3-O-bis[(3R)-3-hydroxyacyl]-alpha-D-glucosamine + holo-[ACP] + H(+). Its pathway is bacterial outer membrane biogenesis; LPS lipid A biosynthesis. Its function is as follows. Catalyzes the N-acylation of UDP-3-O-acylglucosamine using 3-hydroxyacyl-ACP as the acyl donor. Is involved in the biosynthesis of lipid A, a phosphorylated glycolipid that anchors the lipopolysaccharide to the outer membrane of the cell. This is UDP-3-O-acylglucosamine N-acyltransferase from Paraburkholderia phymatum (strain DSM 17167 / CIP 108236 / LMG 21445 / STM815) (Burkholderia phymatum).